The following is a 310-amino-acid chain: MTALSRTPVFDAADTAALLDYPALLATLARTVADYAAGEIVSPERLVVPLQAGGVMLSMPSSAHDLAIHKLVNVCPGNAARGLPTILGQVIACDATTGEMRFVLDGPTVTGRRTAAVTALGVQALHGTPREILLIGTGKQAANHAEAFTALFPDARLHVRGSRAASAAEFCAAHRAHAPQLMPLDGDAIPDAIDVVVTLTTSRTPVYRDAAREGRLVVGVGAFTADAAEIAADTVRRSRLVVDDPAGARHEAGDLIVANVDWQQVASLADVLNGTFARGGPMLFKTVGCAAWDLAACRTARDALAAREQR.

The protein belongs to the ornithine cyclodeaminase/mu-crystallin family.

It carries out the reaction L-proline + NAD(+) = 1-pyrroline-2-carboxylate + NADH + H(+). The enzyme catalyses L-proline + NADP(+) = 1-pyrroline-2-carboxylate + NADPH + H(+). In terms of biological role, catalyzes the reduction of Delta(1)-pyrroline-2-carboxylate (Pyr2C) to L-proline, using NADPH as the electron donor. May be involved in a degradation pathway that converts trans-3-hydroxy-L-proline (t3LHyp) to L-proline. This is Delta(1)-pyrroline-2-carboxylate reductase 1 from Burkholderia multivorans (strain ATCC 17616 / 249).